The following is a 971-amino-acid chain: uncharacterized protein (971 aa).

The first 24 residues, 1-24 (MQSNLLKVLGVLAIVATLVCFIFA), serve as a signal peptide directing secretion. The tract at residues 127 to 146 (RTRPGKSNLDDSNQMIPIPR) is disordered. 6 consecutive transmembrane segments (helical) span residues 611-631 (IKAILILYVMTYGAMFLLGFA), 721-741 (LGLSGIIYFIITFIAVCIVII), 753-773 (AFMATCILIGIAPLFISFLLF), 795-815 (VVMMAGIIVLTQLFTIYLDFV), 832-852 (FIGTILPIALLNVPIFCINWF), and 865-885 (GVNMQNIVALVIIAYGMYGYV). Basic residues predominate over residues 933–944 (TSRAKSRLKQRN). Residues 933–971 (TSRAKSRLKQRNRTLEHAEQNSKKYMKKIGENTNEGTLK) form a disordered region. Residues 945-954 (RTLEHAEQNS) show a composition bias toward basic and acidic residues.

This sequence belongs to the TrbL/VirB6 family.

It localises to the cell membrane. This is an uncharacterized protein from Rickettsia typhi (strain ATCC VR-144 / Wilmington).